Here is a 63-residue protein sequence, read N- to C-terminus: Large ribosomal subunit protein uL29 (63 aa).

This sequence belongs to the universal ribosomal protein uL29 family.

The sequence is that of Large ribosomal subunit protein uL29 from Bordetella pertussis (strain Tohama I / ATCC BAA-589 / NCTC 13251).